The sequence spans 426 residues: NADH-quinone oxidoreductase subunit F (426 aa).

An NAD(+)-binding site is contributed by 65 to 74 (GRGGAGFPTG). 176–223 (GAGAYICGEETALIESLEGKRGHPRLKPPYPVQKGLWGKPTVVNNVET) is an FMN binding site. Positions 347, 350, 353, and 393 each coordinate [4Fe-4S] cluster.

This sequence belongs to the complex I 51 kDa subunit family. FMN serves as cofactor. Requires [4Fe-4S] cluster as cofactor.

The enzyme catalyses a quinone + NADH + 5 H(+)(in) = a quinol + NAD(+) + 4 H(+)(out). NDH-1 shuttles electrons from NADH, via FMN and iron-sulfur (Fe-S) centers, to quinones in the respiratory chain. Couples the redox reaction to proton translocation (for every two electrons transferred, four hydrogen ions are translocated across the cytoplasmic membrane), and thus conserves the redox energy in a proton gradient. In Aquifex aeolicus (strain VF5), this protein is NADH-quinone oxidoreductase subunit F (nuoF).